Consider the following 451-residue polypeptide: MKFGKLHEFIYSLSTQDKYSEFDPKKSFNRVNTQETELLFSHHNQSTASLIGGPTNDVDSTVNKNQFDGVHEVRLAWRHIKNWLLKYSPDLNSTLQSPCTDADLSDFQKDLNIKLPNCLIEFYKITDGQSYFNDNGSGGLVFGLKLMPIDEVMVMTEHWRKVADYLNSKLLHANQTNKLQELSKLETSHANSSQLKFSSSNLDLIEPVKIAKQQRHESAGSPNIPRQKSIPPGTIHDSFAHPMWIPIITDEVGNCIGIDLCPPTNGGGTWGQVILFGREFDNKYLIADNFGDFLLIFANDLEMGNWDFRSSLANNNQDLLIGSEGELVFVEKGTNKEIPYLEVLKKRCIEKWLSSLNESNSEKSEEIKHLIKDLNSNTSSILKFKNSMDQFVNNNISSIEGISDPIIHSENQIAGGSDNAKNQVKLGETSDTKQDDTSKIASTVSTSDEDE.

Polar residues predominate over residues 410 to 422 (ENQIAGGSDNAKN). The interval 410–451 (ENQIAGGSDNAKNQVKLGETSDTKQDDTSKIASTVSTSDEDE) is disordered. Basic and acidic residues predominate over residues 428 to 438 (ETSDTKQDDTS). Polar residues predominate over residues 439–451 (KIASTVSTSDEDE).

This sequence belongs to the KNR4/SMI1 family.

This Debaryomyces hansenii (strain ATCC 36239 / CBS 767 / BCRC 21394 / JCM 1990 / NBRC 0083 / IGC 2968) (Yeast) protein is KNR4/SMI1 homolog 1.